Here is a 161-residue protein sequence, read N- to C-terminus: Ragulator complex protein LAMTOR1 (161 aa).

A disordered region spans residues 1–43; it reads MGCCYSSENEDSDQDREERKLLLDPSSTPTKALNGAEPNYHSL. The N-myristoyl glycine moiety is linked to residue glycine 2. S-palmitoyl cysteine attachment occurs at residues cysteine 3 and cysteine 4. Lysine 20 participates in a covalent cross-link: Glycyl lysine isopeptide (Lys-Gly) (interchain with G-Cter in ubiquitin). Phosphoserine is present on serine 27. Threonine 28 bears the Phosphothreonine mark. Residue lysine 31 forms a Glycyl lysine isopeptide (Lys-Gly) (interchain with G-Cter in ubiquitin) linkage. Residues serine 42 and serine 56 each carry the phosphoserine modification. Residue lysine 60 forms a Glycyl lysine isopeptide (Lys-Gly) (interchain with G-Cter in ubiquitin) linkage. Residue serine 98 is modified to Phosphoserine. Glycyl lysine isopeptide (Lys-Gly) (interchain with G-Cter in ubiquitin) cross-links involve residues lysine 103 and lysine 104. Residues 121 to 161 are interaction with LAMTOR2 and LAMTOR3; that stretch reads SEPIPFSDLQQVSRIAAYAYSALSQIRVDAKEELVVQFGIP. At serine 141 the chain carries Phosphoserine.

It belongs to the LAMTOR1 family. Part of the Ragulator complex composed of LAMTOR1, LAMTOR2, LAMTOR3, LAMTOR4 and LAMTOR5. LAMTOR4 and LAMTOR5 form a heterodimer that interacts, through LAMTOR1, with a LAMTOR2, LAMTOR3 heterodimer. Interacts with LAMTOR2 and LAMTOR3; the interaction is direct. The Ragulator complex interacts with both the mTORC1 complex and heterodimers constituted of the Rag GTPases RagA/RRAGA, RagB/RRAGB, RagC/RRAGC and RagD/RRAGD; regulated by amino acid availability. The Ragulator complex interacts with SLC38A9; the probable amino acid sensor. Component of the lysosomal folliculin complex (LFC), composed of FLCN, FNIP1 (or FNIP2), RagA/RRAGA or RagB/RRAGB GDP-bound, RagC/RRAGC or RagD/RRAGD GTP-bound, and Ragulator. Associates with the lysosomal V-ATPase complex; interaction promotes the guanine nucleotide exchange factor (GEF) of the Ragulator complex. Interacts with MMP14. Interacts with CDKN1B; prevents the interaction of CDKN1B with RHOA leaving RHOA in a form accessible to activation by ARHGEF2. Interacts with PIP4P1. In terms of processing, N-terminal myristoylation and palmitoylation mediates its recruitment to lysosome membranes, thereby promoting localization of the Ragulator complex to lysosomes. N-myristoylation by NMT1 is required for palmitoylation at Cys-3 and Cys-4. Ubiquitinated at Lys-60, Lys-103 and Lys-104 by UBE3A in neurons, promoting its degradation by the proteasome, thereby limiting mTORC1 signaling and activity-dependent synaptic remodeling. Ubiquitination at Lys-20 impairs the association with the lysosomal V-ATPase complex. Deubiquitination at Lys-20 by USP32 promotes the association with the lysosomal V-ATPase complex and subsequent activation of the mTORC1 complex.

Its subcellular location is the lysosome membrane. It is found in the late endosome membrane. Key component of the Ragulator complex, a multiprotein complex involved in amino acid sensing and activation of mTORC1, a signaling complex promoting cell growth in response to growth factors, energy levels, and amino acids. Activated by amino acids through a mechanism involving the lysosomal V-ATPase, the Ragulator plays a dual role for the small GTPases Rag (RagA/RRAGA, RagB/RRAGB, RagC/RRAGC and/or RagD/RRAGD): it (1) acts as a guanine nucleotide exchange factor (GEF), activating the small GTPases Rag and (2) mediates recruitment of Rag GTPases to the lysosome membrane. Activated Ragulator and Rag GTPases function as a scaffold recruiting mTORC1 to lysosomes where it is in turn activated. LAMTOR1 is directly responsible for anchoring the Ragulator complex to the lysosomal membrane. LAMTOR1 wraps around the other subunits of the Ragulator complex to hold them in place and interacts with the Rag GTPases, thereby playing a key role in the recruitment of the mTORC1 complex to lysosomes. Also involved in the control of embryonic stem cells differentiation via non-canonical RagC/RRAGC and RagD/RRAGD activation: together with FLCN, it is necessary to recruit and activate RagC/RRAGC and RagD/RRAGD at the lysosomes, and to induce exit of embryonic stem cells from pluripotency via non-canonical, mTOR-independent TFE3 inactivation. Also required for late endosomes/lysosomes biogenesis it may regulate both the recycling of receptors through endosomes and the MAPK signaling pathway through recruitment of some of its components to late endosomes. May be involved in cholesterol homeostasis regulating LDL uptake and cholesterol release from late endosomes/lysosomes. May also play a role in RHOA activation. In Mus musculus (Mouse), this protein is Ragulator complex protein LAMTOR1.